Here is a 242-residue protein sequence, read N- to C-terminus: ATP synthase subunit a (242 aa).

The next 6 helical transmembrane spans lie at 31–51 (IYML…FYNW), 84–104 (FIPL…LGMT), 114–134 (IIVT…VGFV), 140–160 (FLTL…MIVI), 189–209 (VIAS…IPLM), and 210–230 (VILI…FTIL).

Belongs to the ATPase A chain family. F-type ATPases have 2 components, CF(1) - the catalytic core - and CF(0) - the membrane proton channel. CF(1) has five subunits: alpha(3), beta(3), gamma(1), delta(1), epsilon(1). CF(0) has three main subunits: a(1), b(2) and c(9-12). The alpha and beta chains form an alternating ring which encloses part of the gamma chain. CF(1) is attached to CF(0) by a central stalk formed by the gamma and epsilon chains, while a peripheral stalk is formed by the delta and b chains.

The protein localises to the cell inner membrane. In terms of biological role, key component of the proton channel; it plays a direct role in the translocation of protons across the membrane. The chain is ATP synthase subunit a from Rickettsia canadensis (strain McKiel).